A 212-amino-acid polypeptide reads, in one-letter code: MNLFRFLGDLSHLLAIILLLLKIWKSRSCAGISGKSQVLFAVVFTARYLDLFTNYISLYNTCMKVVYIACSFTTVWMIYSKFKATYDGNHDTFRVEFLVIPTAILAFLVNHDFTPLEILWTFSIYLESVAILPQLFMVSKTGEAETITSHYLFALGVYRTLYLFNWIWRYHFEGFFDLIAIVAGLVQTVLYCDFFYLYITKVLKGKKLSLPA.

Residues 1 to 4 lie on the Lumenal side of the membrane; that stretch reads MNLF. A helical transmembrane segment spans residues 5–24; it reads RFLGDLSHLLAIILLLLKIW. The Cytoplasmic portion of the chain corresponds to 25–32; that stretch reads KSRSCAGI. A helical transmembrane segment spans residues 33–52; that stretch reads SGKSQVLFAVVFTARYLDLF. The interval 47–48 is interaction with the K-D-E-L motif on target proteins; it reads RY. The Lumenal portion of the chain corresponds to 53-58; that stretch reads TNYISL. The chain crosses the membrane as a helical span at residues 59-79; the sequence is YNTCMKVVYIACSFTTVWMIY. Residues 80–92 are Cytoplasmic-facing; it reads SKFKATYDGNHDT. Residues 93–110 traverse the membrane as a helical segment; the sequence is FRVEFLVIPTAILAFLVN. Residues 111-116 are Lumenal-facing; that stretch reads HDFTPL. The helical transmembrane segment at 117-135 threads the bilayer; that stretch reads EILWTFSIYLESVAILPQL. Topologically, residues 136 to 149 are cytoplasmic; sequence FMVSKTGEAETITS. The helical transmembrane segment at 150-168 threads the bilayer; it reads HYLFALGVYRTLYLFNWIW. The segment at 159-169 is interaction with the K-D-E-L motif on target proteins; that stretch reads RTLYLFNWIWR. At 169–178 the chain is on the lumenal side; the sequence is RYHFEGFFDL. The helical transmembrane segment at 179-199 threads the bilayer; that stretch reads IAIVAGLVQTVLYCDFFYLYI. Over 200 to 212 the chain is Cytoplasmic; it reads TKVLKGKKLSLPA. The interval 204 to 207 is important for recycling of cargo proteins with the sequence motif K-D-E-L from the Golgi to the endoplasmic reticulum; that stretch reads KGKK. Position 209 is a phosphoserine; by PKA (S209).

The protein belongs to the ERD2 family. As to quaternary structure, upon ligand binding the receptor oligomerizes and interacts with components of the transport machinery such as ARFGAP1 and ARF1. Phosphorylation by PKA at Ser-209 is required for endoplasmic reticulum retention function.

The protein localises to the golgi apparatus membrane. Its subcellular location is the cytoplasmic vesicle. It is found in the COPI-coated vesicle membrane. It localises to the endoplasmic reticulum membrane. The protein resides in the endoplasmic reticulum-Golgi intermediate compartment membrane. In terms of biological role, receptor for the C-terminal sequence motif K-D-E-L that is present on endoplasmic reticulum resident proteins and that mediates their recycling from the Golgi back to the endoplasmic reticulum. In Bos taurus (Bovine), this protein is ER lumen protein-retaining receptor 1 (KDELR1).